The sequence spans 68 residues: Large ribosomal subunit protein bL35 (68 aa).

The protein belongs to the bacterial ribosomal protein bL35 family.

The chain is Large ribosomal subunit protein bL35 from Fusobacterium nucleatum subsp. nucleatum (strain ATCC 25586 / DSM 15643 / BCRC 10681 / CIP 101130 / JCM 8532 / KCTC 2640 / LMG 13131 / VPI 4355).